We begin with the raw amino-acid sequence, 208 residues long: Pyridoxine/pyridoxamine 5'-phosphate oxidase (208 aa).

FMN contacts are provided by residues 53–58 (RTVLLK), 68–69 (YS), lysine 75, and glutamine 100. Lysine 58 contacts substrate. The substrate site is built by tyrosine 118, arginine 122, and serine 126. FMN is bound by residues 135-136 (QS) and tryptophan 180. 186–188 (RLH) serves as a coordination point for substrate. Arginine 190 is an FMN binding site.

Belongs to the pyridoxamine 5'-phosphate oxidase family. As to quaternary structure, homodimer. FMN serves as cofactor.

The catalysed reaction is pyridoxamine 5'-phosphate + O2 + H2O = pyridoxal 5'-phosphate + H2O2 + NH4(+). The enzyme catalyses pyridoxine 5'-phosphate + O2 = pyridoxal 5'-phosphate + H2O2. It functions in the pathway cofactor metabolism; pyridoxal 5'-phosphate salvage; pyridoxal 5'-phosphate from pyridoxamine 5'-phosphate: step 1/1. The protein operates within cofactor metabolism; pyridoxal 5'-phosphate salvage; pyridoxal 5'-phosphate from pyridoxine 5'-phosphate: step 1/1. Functionally, catalyzes the oxidation of either pyridoxine 5'-phosphate (PNP) or pyridoxamine 5'-phosphate (PMP) into pyridoxal 5'-phosphate (PLP). This is Pyridoxine/pyridoxamine 5'-phosphate oxidase from Xylella fastidiosa (strain Temecula1 / ATCC 700964).